Here is a 141-residue protein sequence, read N- to C-terminus: Hemoglobin subunit alpha (141 aa).

Residues 1 to 141 (VLSSADKANI…VSTVLTSKYR (141 aa)) enclose the Globin domain. Position 3 is a phosphoserine (S3). N6-succinyllysine occurs at positions 7 and 11. K16 is modified (N6-acetyllysine; alternate). K16 carries the post-translational modification N6-succinyllysine; alternate. Y24 carries the post-translational modification Phosphotyrosine. N6-succinyllysine is present on K40. S49 bears the Phosphoserine mark. H58 contacts O2. Residue H87 participates in heme b binding. A Phosphoserine modification is found at S102. Residue T108 is modified to Phosphothreonine. A Phosphoserine modification is found at S131. 2 positions are modified to phosphothreonine: T134 and T137. A Phosphoserine modification is found at S138.

This sequence belongs to the globin family. Heterotetramer of two alpha chains and two beta chains. In terms of tissue distribution, red blood cells.

Functionally, involved in oxygen transport from the lung to the various peripheral tissues. In terms of biological role, hemopressin acts as an antagonist peptide of the cannabinoid receptor CNR1. Hemopressin-binding efficiently blocks cannabinoid receptor CNR1 and subsequent signaling. The protein is Hemoglobin subunit alpha (HBA) of Crocuta crocuta (Spotted hyena).